We begin with the raw amino-acid sequence, 91 residues long: Small ribosomal subunit protein bS16 (91 aa).

It belongs to the bacterial ribosomal protein bS16 family.

The sequence is that of Small ribosomal subunit protein bS16 from Levilactobacillus brevis (strain ATCC 367 / BCRC 12310 / CIP 105137 / JCM 1170 / LMG 11437 / NCIMB 947 / NCTC 947) (Lactobacillus brevis).